Reading from the N-terminus, the 103-residue chain is Pyrimidine/purine nucleoside phosphorylase (103 aa).

It belongs to the nucleoside phosphorylase PpnP family.

It catalyses the reaction a purine D-ribonucleoside + phosphate = a purine nucleobase + alpha-D-ribose 1-phosphate. The catalysed reaction is adenosine + phosphate = alpha-D-ribose 1-phosphate + adenine. It carries out the reaction cytidine + phosphate = cytosine + alpha-D-ribose 1-phosphate. The enzyme catalyses guanosine + phosphate = alpha-D-ribose 1-phosphate + guanine. It catalyses the reaction inosine + phosphate = alpha-D-ribose 1-phosphate + hypoxanthine. The catalysed reaction is thymidine + phosphate = 2-deoxy-alpha-D-ribose 1-phosphate + thymine. It carries out the reaction uridine + phosphate = alpha-D-ribose 1-phosphate + uracil. The enzyme catalyses xanthosine + phosphate = alpha-D-ribose 1-phosphate + xanthine. In terms of biological role, catalyzes the phosphorolysis of diverse nucleosides, yielding D-ribose 1-phosphate and the respective free bases. Can use uridine, adenosine, guanosine, cytidine, thymidine, inosine and xanthosine as substrates. Also catalyzes the reverse reactions. This chain is Pyrimidine/purine nucleoside phosphorylase, found in Shewanella putrefaciens (strain CN-32 / ATCC BAA-453).